The primary structure comprises 289 residues: Phosphatidylserine decarboxylase proenzyme (289 aa).

Residues Asp88, His145, and Ser251 each act as charge relay system; for autoendoproteolytic cleavage activity in the active site. Catalysis depends on Ser251, which acts as the Schiff-base intermediate with substrate; via pyruvic acid; for decarboxylase activity. Pyruvic acid (Ser); by autocatalysis is present on Ser251.

The protein belongs to the phosphatidylserine decarboxylase family. PSD-B subfamily. Prokaryotic type I sub-subfamily. As to quaternary structure, heterodimer of a large membrane-associated beta subunit and a small pyruvoyl-containing alpha subunit. Pyruvate is required as a cofactor. Post-translationally, is synthesized initially as an inactive proenzyme. Formation of the active enzyme involves a self-maturation process in which the active site pyruvoyl group is generated from an internal serine residue via an autocatalytic post-translational modification. Two non-identical subunits are generated from the proenzyme in this reaction, and the pyruvate is formed at the N-terminus of the alpha chain, which is derived from the carboxyl end of the proenzyme. The autoendoproteolytic cleavage occurs by a canonical serine protease mechanism, in which the side chain hydroxyl group of the serine supplies its oxygen atom to form the C-terminus of the beta chain, while the remainder of the serine residue undergoes an oxidative deamination to produce ammonia and the pyruvoyl prosthetic group on the alpha chain. During this reaction, the Ser that is part of the protease active site of the proenzyme becomes the pyruvoyl prosthetic group, which constitutes an essential element of the active site of the mature decarboxylase.

It localises to the cell membrane. It catalyses the reaction a 1,2-diacyl-sn-glycero-3-phospho-L-serine + H(+) = a 1,2-diacyl-sn-glycero-3-phosphoethanolamine + CO2. The protein operates within phospholipid metabolism; phosphatidylethanolamine biosynthesis; phosphatidylethanolamine from CDP-diacylglycerol: step 2/2. Its function is as follows. Catalyzes the formation of phosphatidylethanolamine (PtdEtn) from phosphatidylserine (PtdSer). This is Phosphatidylserine decarboxylase proenzyme from Polaromonas naphthalenivorans (strain CJ2).